We begin with the raw amino-acid sequence, 380 residues long: MKNISLLGASGSIGTQTLDVLRSHPDQFRLVAFSAGKNIDYAVKVIQEFSPQIVSVQREEDVLKLQAVSGNTKVVYGSEGLLEVALHPDAEIVVNAVVGSVGLLPTLRAIEAKKTIGIANKETLVTAGHLVMEAARKHNVSLLPVDSEHSAIFQCLNGENEKRISRLIITASGGSFRDKTRDELHHVTVEDALRHPNWSMGSKITIDSATMMNKGLEVIEAHWLFGIPYEQIDVVLHKESIIHSMVEFEDRSVMAQLGSPDMRVPIQYALTYPDRLPLSDTKQLNLWEMGTLHFEKMNQERFRCLRFAYEAGKTGGSMPAVMNAANEVAVEAFLQKRIGFLTVEDLIEKAMNHHNVIARPSLEEILEIDAATRRFVMEQI.

Positions 10, 11, 12, 13, 36, 37, 38, and 120 each coordinate NADPH. Lys121 lines the 1-deoxy-D-xylulose 5-phosphate pocket. An NADPH-binding site is contributed by Glu122. Position 146 (Asp146) interacts with Mn(2+). Ser147, Glu148, Ser172, and His195 together coordinate 1-deoxy-D-xylulose 5-phosphate. Glu148 provides a ligand contact to Mn(2+). Gly201 lines the NADPH pocket. Positions 208, 213, 214, and 217 each coordinate 1-deoxy-D-xylulose 5-phosphate. Residue Glu217 participates in Mn(2+) binding.

It belongs to the DXR family. Mg(2+) is required as a cofactor. Mn(2+) serves as cofactor.

It catalyses the reaction 2-C-methyl-D-erythritol 4-phosphate + NADP(+) = 1-deoxy-D-xylulose 5-phosphate + NADPH + H(+). It participates in isoprenoid biosynthesis; isopentenyl diphosphate biosynthesis via DXP pathway; isopentenyl diphosphate from 1-deoxy-D-xylulose 5-phosphate: step 1/6. Catalyzes the NADPH-dependent rearrangement and reduction of 1-deoxy-D-xylulose-5-phosphate (DXP) to 2-C-methyl-D-erythritol 4-phosphate (MEP). The sequence is that of 1-deoxy-D-xylulose 5-phosphate reductoisomerase from Bacillus cereus (strain Q1).